A 349-amino-acid polypeptide reads, in one-letter code: Transmembrane protein 255A (349 aa).

A run of 4 helical transmembrane segments spans residues 30 to 50 (IYVTVTLLIVSVLILTVGLAA), 57 to 77 (VTVGGYYPGVILGFGSFLGII), 89 to 109 (LVASIVFISFGVIAAFCCAIV), and 226 to 246 (TILNIVGLFLGIITAAVLGGF). A disordered region spans residues 303-329 (PSSPPSGLSDEPQSASPSPSYMWSSSA). A compositionally biased stretch (low complexity) spans 316-329 (SASPSPSYMWSSSA).

Belongs to the TMEM255 family.

The protein localises to the membrane. The protein is Transmembrane protein 255A (TMEM255A) of Homo sapiens (Human).